The following is a 232-amino-acid chain: Large ribosomal subunit protein uL1 (232 aa).

The protein belongs to the universal ribosomal protein uL1 family. As to quaternary structure, part of the 50S ribosomal subunit.

In terms of biological role, binds directly to 23S rRNA. The L1 stalk is quite mobile in the ribosome, and is involved in E site tRNA release. Functionally, protein L1 is also a translational repressor protein, it controls the translation of the L11 operon by binding to its mRNA. This chain is Large ribosomal subunit protein uL1, found in Colwellia psychrerythraea (strain 34H / ATCC BAA-681) (Vibrio psychroerythus).